Here is a 226-residue protein sequence, read N- to C-terminus: Probable C4-dicarboxylate response regulator DctR (226 aa).

Residues 7-123 (KVLLIEDDPM…RMRQALEKYK (117 aa)) enclose the Response regulatory domain. Asp58 carries the post-translational modification 4-aspartylphosphate. Residues 179-198 (AEEVAKALGIARVTARRYLD) constitute a DNA-binding region (H-T-H motif).

Phosphorylated by DctS.

Its subcellular location is the cytoplasm. Member of the two-component regulatory system DctS/DctR. Essential for expression of dctP. The polypeptide is Probable C4-dicarboxylate response regulator DctR (dctR) (Bacillus subtilis (strain 168)).